A 58-amino-acid chain; its full sequence is MSKIVVRKNESLDDALRRFKRSVTKAGTLQEARKREHYEKPSVKRKRKSEAARKRKKI.

The disordered stretch occupies residues 24 to 58 (TKAGTLQEARKREHYEKPSVKRKRKSEAARKRKKI). Residues 31–42 (EARKREHYEKPS) show a composition bias toward basic and acidic residues. Residues 43–58 (VKRKRKSEAARKRKKI) show a composition bias toward basic residues.

It belongs to the bacterial ribosomal protein bS21 family.

This chain is Small ribosomal subunit protein bS21, found in Streptococcus thermophilus (strain CNRZ 1066).